A 105-amino-acid chain; its full sequence is Large ribosomal subunit protein P2 (105 aa).

It belongs to the eukaryotic ribosomal protein P1/P2 family. As to quaternary structure, P1 and P2 exist as dimers at the large ribosomal subunit. Phosphorylated.

Plays an important role in the elongation step of protein synthesis. This is Large ribosomal subunit protein P2 (LIP2) from Leishmania braziliensis.